An 88-amino-acid chain; its full sequence is KTx type I (88 aa).

The signal sequence occupies residues 1–19 (MKTTLVVVVLACIVALTSA). The 35-residue stretch at 54 to 88 (CKDVLSEFSCGVLKKDGQCNKADIQAKCKLTCDKC) folds into the ShKT domain. 3 disulfides stabilise this stretch: Cys-54–Cys-88, Cys-63–Cys-81, and Cys-72–Cys-85.

It belongs to the sea anemone type 1 potassium channel toxin family. As to expression, expressed both outside and in acontia, a specialised envenomation structure laden with batteries of venom-containing nematocysts found only in the superfamily Metridioidea.

It is found in the secreted. The protein localises to the nematocyst. Inhibits voltage-gated potassium channels (Kv1/KCNA). The chain is KTx type I from Calliactis polypus (Hermit crab anemone).